The chain runs to 311 residues: RNA polymerase sigma factor SigA4 (311 aa).

A sigma-70 factor domain-2 region spans residues 78 to 148; the sequence is MLKANLRLVV…TRAIDNHART (71 aa). An Interaction with polymerase core subunit RpoC motif is present at residues 102 to 105; sequence DLIQ. The segment at 157-234 is sigma-70 factor domain-3; that stretch reads EKISRIKKMT…DPKSLEPMDA (78 aa). Residues 247–304 form a sigma-70 factor domain-4 region; sequence WLAHLTEREQQVLQLRFGLHDGEQHTLAEIGRRLNVSRERIRQVEARALQKLRVLSQQ. Residues 273 to 292 constitute a DNA-binding region (H-T-H motif); that stretch reads LAEIGRRLNVSRERIRQVEA.

It belongs to the sigma-70 factor family.

The protein localises to the cytoplasm. Functionally, sigma factors are initiation factors that promote the attachment of RNA polymerase to specific initiation sites and are then released. The protein is RNA polymerase sigma factor SigA4 (sigA4) of Synechococcus elongatus (strain ATCC 33912 / PCC 7942 / FACHB-805) (Anacystis nidulans R2).